The following is a 178-amino-acid chain: Stathmin-2-A (178 aa).

The region spanning 38–178 (DDMEIKQLNK…RNKEQLELSG (141 aa)) is the SLD domain. A coiled-coil region spans residues 75–178 (KKKDVSLGEI…RNKEQLELSG (104 aa)).

The protein belongs to the stathmin family. As to expression, nervous tissue.

The protein localises to the cytoplasm. It localises to the membrane. Its subcellular location is the cell projection. It is found in the lamellipodium. The polypeptide is Stathmin-2-A (stmn2-a) (Xenopus laevis (African clawed frog)).